A 735-amino-acid polypeptide reads, in one-letter code: Ion-translocating oxidoreductase complex subunit C (735 aa).

4Fe-4S ferredoxin-type domains are found at residues 368–397 and 407–436; these read MGAP…QQLY and KATA…VQYF. Residues C377, C380, C383, C387, C416, C419, C422, and C426 each coordinate [4Fe-4S] cluster. The interval 534 to 716 is disordered; that stretch reads QARAKQAAHP…ADPRKAAVAA (183 aa).

The protein belongs to the 4Fe4S bacterial-type ferredoxin family. RnfC subfamily. The complex is composed of six subunits: RsxA, RsxB, RsxC, RsxD, RsxE and RsxG. [4Fe-4S] cluster is required as a cofactor.

The protein resides in the cell inner membrane. In terms of biological role, part of a membrane-bound complex that couples electron transfer with translocation of ions across the membrane. Required to maintain the reduced state of SoxR. In Salmonella agona (strain SL483), this protein is Ion-translocating oxidoreductase complex subunit C.